Here is a 413-residue protein sequence, read N- to C-terminus: MAGLAPEGSQFDARQYDAKMTELLGTEQEEFFTSYDEVYDSFDAMGLQENLLRGIYAYGFEKPSAIQQRGIVPFCKGLDVIQQAQSGTGKTATFCSGVLQQLDYSLVECQALVLAPTRELAQQIEKVMRALGDYLGVKVHACVGGTSVREDQRILQSGVHVVVGTPGRVFDMLRRQSLRPDHIKMFVLDEADEMLSRGFKDQIYDIFQLLPPKIQVGVFSATMPPEALEITRKFMNKPVRILVKRDDVTLEGIKQFYVNVDKEEWKLETLCDLYETLAITQSVIFVNTRRKVDWLTDKMRSRDHTVSATHGDMDQNTRDIIMREFRSGSSRVLITTDLLARGIDVQQVSLVINYDLPTQPENYLHRIGRSGRFGRKGVAINFVTKDDERMLSDIQKFYNVVIEELPANVADLL.

Positions D40 to Q68 match the Q motif motif. A Helicase ATP-binding domain is found at I71 to I241. Residue A84–T91 coordinates ATP. Positions D189 to D192 match the DEAD box motif. A Helicase C-terminal domain is found at G252–L413.

The protein belongs to the DEAD box helicase family. eIF4A subfamily. In terms of assembly, eIF4F is a multi-subunit complex, the composition of which varies with external and internal environmental conditions. It is composed of at least EIF4A, EIF4E and EIF4G.

The enzyme catalyses ATP + H2O = ADP + phosphate + H(+). In terms of biological role, ATP-dependent RNA helicase which is a subunit of the eIF4F complex involved in cap recognition and is required for mRNA binding to ribosome. In the current model of translation initiation, eIF4A unwinds RNA secondary structures in the 5'-UTR of mRNAs which is necessary to allow efficient binding of the small ribosomal subunit, and subsequent scanning for the initiator codon. The chain is Eukaryotic initiation factor 4A-10 from Nicotiana tabacum (Common tobacco).